The sequence spans 440 residues: uncharacterized protein (440 aa).

The next 12 membrane-spanning stretches (helical) occupy residues 24–44 (VVIG…APAA), 47–67 (AGSG…CNAI), 93–113 (FWGY…CAAM), 117–137 (VGFY…VVAL), 155–175 (IVAV…GSGA), 183–203 (IGVD…FFAF), 229–249 (LALG…IAVL), 276–296 (VVQI…ILGV), 323–343 (PFRA…TADI), 346–366 (AIGF…ASAL), 379–399 (IPLV…LSSV), and 400–420 (AAGA…RIIT).

It belongs to the amino acid-polyamine-organocation (APC) superfamily.

It localises to the cell membrane. Its function is as follows. Probable amino-acid or metabolite transport protein. This is an uncharacterized protein from Mycobacterium bovis (strain ATCC BAA-935 / AF2122/97).